The primary structure comprises 396 residues: Ribosomal RNA large subunit methyltransferase I (396 aa).

In terms of domain architecture, PUA spans 2–79; the sequence is TSAVYLQAGR…EKEVIDQHFF (78 aa).

The protein belongs to the methyltransferase superfamily. RlmI family.

It is found in the cytoplasm. The enzyme catalyses cytidine(1962) in 23S rRNA + S-adenosyl-L-methionine = 5-methylcytidine(1962) in 23S rRNA + S-adenosyl-L-homocysteine + H(+). In terms of biological role, specifically methylates the cytosine at position 1962 (m5C1962) of 23S rRNA. The chain is Ribosomal RNA large subunit methyltransferase I from Pseudoalteromonas translucida (strain TAC 125).